We begin with the raw amino-acid sequence, 49 residues long: Large ribosomal subunit protein bL33A (49 aa).

This sequence belongs to the bacterial ribosomal protein bL33 family.

The chain is Large ribosomal subunit protein bL33A from Staphylococcus saprophyticus subsp. saprophyticus (strain ATCC 15305 / DSM 20229 / NCIMB 8711 / NCTC 7292 / S-41).